We begin with the raw amino-acid sequence, 429 residues long: Ubiquinone hydroxylase UbiL (429 aa).

The tract at residues 1 to 22 is disordered; sequence MSEPLLRGLAAGDPPSATGPVT.

It belongs to the UbiH/COQ6 family. It depends on FAD as a cofactor.

The catalysed reaction is a 2-(all-trans-polyprenyl)phenol + NADPH + O2 + H(+) = a 3-(all-trans-polyprenyl)benzene-1,2-diol + NADP(+) + H2O. Its pathway is cofactor biosynthesis; ubiquinone biosynthesis. Functionally, catalyzes the hydroxylation of two positions of the aromatic ring during ubiquinone biosynthesis. The protein is Ubiquinone hydroxylase UbiL of Rhodospirillum rubrum (strain ATCC 11170 / ATH 1.1.1 / DSM 467 / LMG 4362 / NCIMB 8255 / S1).